The following is a 135-amino-acid chain: Fatty acid-binding protein 5 (135 aa).

A2 bears the N-acetylalanine mark. K17 is subject to N6-acetyllysine. Position 22 is a phosphotyrosine; by Tyr-kinases (Y22). A Nuclear localization signal motif is present at residues 24-34; it reads KEVGVGMALRK. N-eicosanoyl ethanolamine is bound by residues C43 and R109. C120 and C127 form a disulfide bridge. 129–131 is a (9Z,12Z)-octadecadienoate binding site; it reads RVY. Position 131 (Y131) interacts with N-eicosanoyl ethanolamine. Y131 is a hexadecanoate binding site. Y131 carries the phosphotyrosine modification.

This sequence belongs to the calycin superfamily. Fatty-acid binding protein (FABP) family. Monomer. Most abundant in lens and retina (found in the mueller cells), moderately abundant in heart and testis (found in the Sertoli cells), and present in very low amounts in lung.

The protein localises to the cytoplasm. The protein resides in the nucleus. It localises to the synapse. Its subcellular location is the postsynaptic density. It is found in the secreted. The catalysed reaction is hexadecanoate(out) = hexadecanoate(in). It carries out the reaction (9Z,12Z)-octadecadienoate(out) = (9Z,12Z)-octadecadienoate(in). It catalyses the reaction (9Z)-octadecenoate(out) = (9Z)-octadecenoate(in). Functionally, intracellular carrier for long-chain fatty acids and related active lipids, such as endocannabinoids, that regulate the metabolism and actions of the ligands they bind. In addition to the cytosolic transport, selectively delivers specific fatty acids from the cytosol to the nucleus, wherein they activate nuclear receptors. Delivers retinoic acid to the nuclear receptor peroxisome proliferator-activated receptor delta; which promotes proliferation and survival. May also serve as a synaptic carrier of endocannabinoid at central synapses and thus controls retrograde endocannabinoid signaling. Modulates inflammation by regulating PTGES induction via NF-kappa-B activation, and prostaglandin E2 (PGE2) biosynthesis during inflammation. The chain is Fatty acid-binding protein 5 (FABP5) from Bos taurus (Bovine).